The sequence spans 174 residues: Crossover junction endodeoxyribonuclease RuvC (174 aa).

Catalysis depends on residues aspartate 16, glutamate 76, and aspartate 148. 3 residues coordinate Mg(2+): aspartate 16, glutamate 76, and aspartate 148.

It belongs to the RuvC family. Homodimer which binds Holliday junction (HJ) DNA. The HJ becomes 2-fold symmetrical on binding to RuvC with unstacked arms; it has a different conformation from HJ DNA in complex with RuvA. In the full resolvosome a probable DNA-RuvA(4)-RuvB(12)-RuvC(2) complex forms which resolves the HJ. Mg(2+) serves as cofactor.

It is found in the cytoplasm. The enzyme catalyses Endonucleolytic cleavage at a junction such as a reciprocal single-stranded crossover between two homologous DNA duplexes (Holliday junction).. In terms of biological role, the RuvA-RuvB-RuvC complex processes Holliday junction (HJ) DNA during genetic recombination and DNA repair. Endonuclease that resolves HJ intermediates. Cleaves cruciform DNA by making single-stranded nicks across the HJ at symmetrical positions within the homologous arms, yielding a 5'-phosphate and a 3'-hydroxyl group; requires a central core of homology in the junction. The consensus cleavage sequence is 5'-(A/T)TT(C/G)-3'. Cleavage occurs on the 3'-side of the TT dinucleotide at the point of strand exchange. HJ branch migration catalyzed by RuvA-RuvB allows RuvC to scan DNA until it finds its consensus sequence, where it cleaves and resolves the cruciform DNA. The polypeptide is Crossover junction endodeoxyribonuclease RuvC (Rhodopseudomonas palustris (strain BisA53)).